Here is a 156-residue protein sequence, read N- to C-terminus: Endoribonuclease YbeY (156 aa).

Zn(2+) contacts are provided by histidine 122, histidine 126, and histidine 132.

Belongs to the endoribonuclease YbeY family. It depends on Zn(2+) as a cofactor.

It is found in the cytoplasm. Its function is as follows. Single strand-specific metallo-endoribonuclease involved in late-stage 70S ribosome quality control and in maturation of the 3' terminus of the 16S rRNA. This chain is Endoribonuclease YbeY, found in Bacillus cereus (strain G9842).